Consider the following 320-residue polypeptide: ATP-dependent 6-phosphofructokinase (320 aa).

Position 12 (G12) interacts with ATP. ADP contacts are provided by residues 22-26 (RGVVR) and 55-60 (RYSVSD). ATP-binding positions include 73–74 (RF) and 103–106 (GDGS). D104 provides a ligand contact to Mg(2+). 126-128 (TID) serves as a coordination point for substrate. D128 serves as the catalytic Proton acceptor. An ADP-binding site is contributed by R155. Substrate is bound by residues R163 and 170–172 (MGR). ADP contacts are provided by residues 186 to 188 (GCE), K212, and 214 to 216 (KKH). Residues E223, R244, and 250-253 (HIQR) contribute to the substrate site.

Belongs to the phosphofructokinase type A (PFKA) family. ATP-dependent PFK group I subfamily. Prokaryotic clade 'B1' sub-subfamily. As to quaternary structure, homotetramer. Mg(2+) is required as a cofactor.

The protein localises to the cytoplasm. It carries out the reaction beta-D-fructose 6-phosphate + ATP = beta-D-fructose 1,6-bisphosphate + ADP + H(+). The protein operates within carbohydrate degradation; glycolysis; D-glyceraldehyde 3-phosphate and glycerone phosphate from D-glucose: step 3/4. Its activity is regulated as follows. Allosterically activated by ADP and other diphosphonucleosides, and allosterically inhibited by phosphoenolpyruvate. Functionally, catalyzes the phosphorylation of D-fructose 6-phosphate to fructose 1,6-bisphosphate by ATP, the first committing step of glycolysis. In Buchnera aphidicola subsp. Schizaphis graminum (strain Sg), this protein is ATP-dependent 6-phosphofructokinase.